The primary structure comprises 221 residues: Adenylate kinase (221 aa).

ATP is bound at residue 10–15 (GAGKGT). Positions 30 to 59 (STGDMLRAAVKAGTEFGVAAKKIMDAGGLV) are NMP. AMP is bound by residues T31, R36, 57–59 (GLV), 85–88 (GFPR), and Q92. Residues 122 to 159 (GRRVHPASGRTYHIKYNPPKVEGKDDVTGDALIQRDDD) form an LID region. Residues R123 and 132 to 133 (TY) each bind ATP. Residues R156 and R167 each contribute to the AMP site. ATP is bound at residue G207.

Belongs to the adenylate kinase family. Monomer.

The protein localises to the cytoplasm. It carries out the reaction AMP + ATP = 2 ADP. It participates in purine metabolism; AMP biosynthesis via salvage pathway; AMP from ADP: step 1/1. Its function is as follows. Catalyzes the reversible transfer of the terminal phosphate group between ATP and AMP. Plays an important role in cellular energy homeostasis and in adenine nucleotide metabolism. This chain is Adenylate kinase, found in Polynucleobacter asymbioticus (strain DSM 18221 / CIP 109841 / QLW-P1DMWA-1) (Polynucleobacter necessarius subsp. asymbioticus).